The chain runs to 171 residues: 3-hydroxydecanoyl-[acyl-carrier-protein] dehydratase (171 aa).

The active site involves H70.

This sequence belongs to the thioester dehydratase family. FabA subfamily. Homodimer.

The protein localises to the cytoplasm. It carries out the reaction a (3R)-hydroxyacyl-[ACP] = a (2E)-enoyl-[ACP] + H2O. The catalysed reaction is (3R)-hydroxydecanoyl-[ACP] = (2E)-decenoyl-[ACP] + H2O. It catalyses the reaction (2E)-decenoyl-[ACP] = (3Z)-decenoyl-[ACP]. The protein operates within lipid metabolism; fatty acid biosynthesis. Functionally, necessary for the introduction of cis unsaturation into fatty acids. Catalyzes the dehydration of (3R)-3-hydroxydecanoyl-ACP to E-(2)-decenoyl-ACP and then its isomerization to Z-(3)-decenoyl-ACP. Can catalyze the dehydratase reaction for beta-hydroxyacyl-ACPs with saturated chain lengths up to 16:0, being most active on intermediate chain length. In Histophilus somni (strain 129Pt) (Haemophilus somnus), this protein is 3-hydroxydecanoyl-[acyl-carrier-protein] dehydratase.